Consider the following 144-residue polypeptide: Transcriptional regulator MraZ (144 aa).

SpoVT-AbrB domains lie at 5–47 (EYQY…PLDR) and 76–121 (AHKT…SQER).

This sequence belongs to the MraZ family. Forms oligomers.

It localises to the cytoplasm. The protein resides in the nucleoid. The chain is Transcriptional regulator MraZ from Thermus thermophilus (strain ATCC BAA-163 / DSM 7039 / HB27).